Consider the following 241-residue polypeptide: PRA1 family protein H (241 aa).

Helical transmembrane passes span 142–162 (LFIV…VGLL), 189–205 (LSIG…LTFL), and 209–228 (MALF…HAGF).

It belongs to the PRA1 family.

It localises to the endoplasmic reticulum membrane. May be involved in both secretory and endocytic intracellular trafficking in the endosomal/prevacuolar compartments. In Arabidopsis thaliana (Mouse-ear cress), this protein is PRA1 family protein H (PRA1H).